A 78-amino-acid chain; its full sequence is Large ribosomal subunit protein bL28 (78 aa).

It belongs to the bacterial ribosomal protein bL28 family.

This Thiobacillus denitrificans (strain ATCC 25259 / T1) protein is Large ribosomal subunit protein bL28.